A 142-amino-acid chain; its full sequence is Universal stress protein G (142 aa).

This sequence belongs to the universal stress protein A family.

The protein is Universal stress protein G (uspG) of Escherichia coli O157:H7.